We begin with the raw amino-acid sequence, 378 residues long: MAKTRVAVLYGGKADEHSISCISAASFMRALDPELFEAVPIGITKTGTWFVDGQDPLGWNLAEGLPEAVETPDSREVVLTIGDGGDGFHARNADGSLDSLGHIDVVLPALHGPFGEDGTIQGLFEMMGVPYVGCGVLASAACMDKHYTKVLLRAAGIPVAPGITLDTRHYDASDEFATDGEEFLRQVNEAGLQYPLFVKPSRAGSSFGVTKVEQIGDAAALAAAVFEASRHDWRVLVEQGIDAREIECAVVRIHPTDPTRAALPGEVVLDRRSEGDDQFYDFDSKYMDSQASHTEIPAKIGDDLIARVRETAVRAFDAVDGMGLSRVDTFVTADGDVLVNEINTLPGCTSISMFPQAWEAMGIPFRTVVTDLIEGALA.

In terms of domain architecture, ATP-grasp spans 149–374 (KVLLRAAGIP…FRTVVTDLIE (226 aa)). 189-247 (EAGLQYPLFVKPSRAGSSFGVTKVEQIGDAAALAAAVFEASRHDWRVLVEQGIDAREIE) provides a ligand contact to ATP. Residues aspartate 328, glutamate 341, and asparagine 343 each coordinate Mg(2+).

This sequence belongs to the D-alanine--D-alanine ligase family. The cofactor is Mg(2+). Requires Mn(2+) as cofactor.

The protein localises to the cytoplasm. The catalysed reaction is 2 D-alanine + ATP = D-alanyl-D-alanine + ADP + phosphate + H(+). Its pathway is cell wall biogenesis; peptidoglycan biosynthesis. In terms of biological role, cell wall formation. The protein is D-alanine--D-alanine ligase of Bifidobacterium animalis subsp. lactis (strain AD011).